The primary structure comprises 128 residues: Small ribosomal subunit protein uS12 (128 aa).

3-methylthioaspartic acid is present on D89.

This sequence belongs to the universal ribosomal protein uS12 family. In terms of assembly, part of the 30S ribosomal subunit. Contacts proteins S8 and S17. May interact with IF1 in the 30S initiation complex.

In terms of biological role, with S4 and S5 plays an important role in translational accuracy. Interacts with and stabilizes bases of the 16S rRNA that are involved in tRNA selection in the A site and with the mRNA backbone. Located at the interface of the 30S and 50S subunits, it traverses the body of the 30S subunit contacting proteins on the other side and probably holding the rRNA structure together. The combined cluster of proteins S8, S12 and S17 appears to hold together the shoulder and platform of the 30S subunit. The sequence is that of Small ribosomal subunit protein uS12 from Campylobacter jejuni subsp. doylei (strain ATCC BAA-1458 / RM4099 / 269.97).